The primary structure comprises 408 residues: Peptidase T (408 aa).

H78 contacts Zn(2+). D80 is an active-site residue. D141 is a Zn(2+) binding site. E175 (proton acceptor) is an active-site residue. Zn(2+) contacts are provided by E176, D198, and H380.

It belongs to the peptidase M20B family. Zn(2+) is required as a cofactor.

The protein localises to the cytoplasm. It carries out the reaction Release of the N-terminal residue from a tripeptide.. Functionally, cleaves the N-terminal amino acid of tripeptides. The chain is Peptidase T from Halothermothrix orenii (strain H 168 / OCM 544 / DSM 9562).